The chain runs to 105 residues: UPF0166 protein aq_450 (105 aa).

This sequence belongs to the UPF0166 family.

This chain is UPF0166 protein aq_450, found in Aquifex aeolicus (strain VF5).